We begin with the raw amino-acid sequence, 424 residues long: Histidine--tRNA ligase (424 aa).

It belongs to the class-II aminoacyl-tRNA synthetase family. In terms of assembly, homodimer.

It is found in the cytoplasm. It carries out the reaction tRNA(His) + L-histidine + ATP = L-histidyl-tRNA(His) + AMP + diphosphate + H(+). This chain is Histidine--tRNA ligase, found in Shigella dysenteriae serotype 1 (strain Sd197).